The chain runs to 198 residues: MYYPEPITKLIDSFSKLPGIGPKTAARLAFFVLNMKEDDVLNFANALVSAKRELSHCSVCGHITDQDPCAICTDTSRDGSLICVVQDPKDVIAMEKMKEFHGKYHVLHGAISPMDGIGPEDINVPDLINRLKDEEVEELILATNPNIEGEATAMYISRLVKPSGIRTTRIAHGLPVGGDLEYADEVTLSKALEGRRDV.

The C4-type zinc-finger motif lies at 57 to 72; that stretch reads CSVCGHITDQDPCAIC. The region spanning 80–175 is the Toprim domain; it reads SLICVVQDPK…RTTRIAHGLP (96 aa).

This sequence belongs to the RecR family.

In terms of biological role, may play a role in DNA repair. It seems to be involved in an RecBC-independent recombinational process of DNA repair. It may act with RecF and RecO. This is Recombination protein RecR from Oceanobacillus iheyensis (strain DSM 14371 / CIP 107618 / JCM 11309 / KCTC 3954 / HTE831).